Reading from the N-terminus, the 62-residue chain is Large ribosomal subunit protein bL28 (62 aa).

The protein belongs to the bacterial ribosomal protein bL28 family.

This is Large ribosomal subunit protein bL28 from Streptococcus thermophilus (strain CNRZ 1066).